A 112-amino-acid polypeptide reads, in one-letter code: T cell receptor alpha variable 41 (112 aa).

An N-terminal signal peptide occupies residues 1–21 (MVKIRQFLLAILWLQLSCVSA). The 89-residue stretch at 24–112 (NEVEQSPQNL…DSAVYICAVR (89 aa)) folds into the Ig-like domain. N32 and N44 each carry an N-linked (GlcNAc...) asparagine glycan. A disulfide bond links C45 and C109.

In terms of assembly, alpha-beta TR is a heterodimer composed of an alpha and beta chain; disulfide-linked. The alpha-beta TR is associated with the transmembrane signaling CD3 coreceptor proteins to form the TR-CD3 (TcR or TCR). The assembly of alpha-beta TR heterodimers with CD3 occurs in the endoplasmic reticulum where a single alpha-beta TR heterodimer associates with one CD3D-CD3E heterodimer, one CD3G-CD3E heterodimer and one CD247 homodimer forming a stable octameric structure. CD3D-CD3E and CD3G-CD3E heterodimers preferentially associate with TR alpha and TR beta chains, respectively. The association of the CD247 homodimer is the last step of TcR assembly in the endoplasmic reticulum and is required for transport to the cell surface.

The protein localises to the cell membrane. V region of the variable domain of T cell receptor (TR) alpha chain that participates in the antigen recognition. Alpha-beta T cell receptors are antigen specific receptors which are essential to the immune response and are present on the cell surface of T lymphocytes. Recognize peptide-major histocompatibility (MH) (pMH) complexes that are displayed by antigen presenting cells (APC), a prerequisite for efficient T cell adaptive immunity against pathogens. Binding of alpha-beta TR to pMH complex initiates TR-CD3 clustering on the cell surface and intracellular activation of LCK that phosphorylates the ITAM motifs of CD3G, CD3D, CD3E and CD247 enabling the recruitment of ZAP70. In turn ZAP70 phosphorylates LAT, which recruits numerous signaling molecules to form the LAT signalosome. The LAT signalosome propagates signal branching to three major signaling pathways, the calcium, the mitogen-activated protein kinase (MAPK) kinase and the nuclear factor NF-kappa-B (NF-kB) pathways, leading to the mobilization of transcription factors that are critical for gene expression and essential for T cell growth and differentiation. The T cell repertoire is generated in the thymus, by V-(D)-J rearrangement. This repertoire is then shaped by intrathymic selection events to generate a peripheral T cell pool of self-MH restricted, non-autoaggressive T cells. Post-thymic interaction of alpha-beta TR with the pMH complexes shapes TR structural and functional avidity. This chain is T cell receptor alpha variable 41, found in Homo sapiens (Human).